Here is a 181-residue protein sequence, read N- to C-terminus: MHSELKVFSDQAPGRVEQHLTDKAAMARVLASAGIRYEQWQANQALSDDPQQDEVIQAYQADIDRLIADEGYQTVDVVSMVPDHPEKTAFRQKFLEEHRHSEDEVRFFVEGQGLFTLHINGKVYEVLCSKGDLISVPANTPHWFDMGPEPRFVAIRLFNNPDGWVANFTGSDIAQQFNRLA.

Fe(2+)-binding residues include histidine 98, histidine 100, glutamate 104, and histidine 142. 4 residues coordinate Ni(2+): histidine 98, histidine 100, glutamate 104, and histidine 142.

This sequence belongs to the acireductone dioxygenase (ARD) family. As to quaternary structure, monomer. Requires Fe(2+) as cofactor. Ni(2+) serves as cofactor.

The enzyme catalyses 1,2-dihydroxy-5-(methylsulfanyl)pent-1-en-3-one + O2 = 3-(methylsulfanyl)propanoate + CO + formate + 2 H(+). It catalyses the reaction 1,2-dihydroxy-5-(methylsulfanyl)pent-1-en-3-one + O2 = 4-methylsulfanyl-2-oxobutanoate + formate + 2 H(+). The protein operates within amino-acid biosynthesis; L-methionine biosynthesis via salvage pathway; L-methionine from S-methyl-5-thio-alpha-D-ribose 1-phosphate: step 5/6. Its function is as follows. Catalyzes 2 different reactions between oxygen and the acireductone 1,2-dihydroxy-3-keto-5-methylthiopentene (DHK-MTPene) depending upon the metal bound in the active site. Fe-containing acireductone dioxygenase (Fe-ARD) produces formate and 2-keto-4-methylthiobutyrate (KMTB), the alpha-ketoacid precursor of methionine in the methionine recycle pathway. Ni-containing acireductone dioxygenase (Ni-ARD) produces methylthiopropionate, carbon monoxide and formate, and does not lie on the methionine recycle pathway. In Alcanivorax borkumensis (strain ATCC 700651 / DSM 11573 / NCIMB 13689 / SK2), this protein is Acireductone dioxygenase.